The sequence spans 887 residues: MRLVNSLGRRKILLILAVIVAFSTVLLFAKLWGRKTSSTLDEVGSKTHGDLTAENKNGGYLPEEEIPDQPPATGAFNYGEALQKAIFFYECQRSGKLDPSTLRLNWRGDSGLDDGKDAGIDLTGGWYDAGDHVKFNLPMSYSAAMLGWAVYEYEDAFKQSGQYNHILNNIKWACDYFIKCHPEKDVYYYQVGDGHADHAWWGPAEVMPMERPSYKVDRSSPGSTVVAETSAALAIASIIFKKVDGEYSKECLKHAKELFEFADTTKSDDGYTAANGFYNSWSGFYDELSWAAVWLYLATNDSSYLDKAESYSDKWGYEPQTNIPKYKWAQCWDDVTYGTYLLLARIKNDNGKYKEAIERHLDWWTTGYNGERITYTPKGLAWLDQWGSLRYATTTAFLACVYSDWENGDKEKAKTYLEFARSQADYALGSTGRSFVVGFGENPPKRPHHRTAHGSWADSQMEPPEHRHVLYGALVGGPDSTDNYTDDISNYTCNEVACDYNAGFVGLLAKMYKLYGGSPDPKFNGIEEVPEDEIFVEAGVNASGNNFIEIKAIVNNKSGWPARVCENLSFRYFINIEEIVNAGKSASDLQVSSSYNQGAKLSDVKHYKDNIYYVEVDLSGTKIYPGGQSAYKKEVQFRISAPEGTVFNPENDYSYQGLSAGTVVKSEYIPVYDAGVLVFGREPGSASKSTSKDNGLSKATPTVKTESQPTAKHTQNPASDFKTPANQNSVKKDQGIKGEVVLQYANGNAGATSNSINPRFKIINNGTKAINLSDVKIRYYYTKEGGASQNFWCDWSSAGNSNVTGNFFNLSSPKEGADTCLEVGFGSGAGTLDPGGSVEVQIRFSKEDWSNYNQSNDYSFNPSASDYTDWNRVTLYISNKLVYGKEP.

The signal sequence occupies residues 1–55; the sequence is MRLVNSLGRRKILLILAVIVAFSTVLLFAKLWGRKTSSTLDEVGSKTHGDLTAEN. Positions 40-66 are disordered; that stretch reads LDEVGSKTHGDLTAENKNGGYLPEEEI. Residues 43–53 are compositionally biased toward basic and acidic residues; sequence VGSKTHGDLTA. Residues 56-518 are catalytic; it reads KNGGYLPEEE…AKMYKLYGGS (463 aa). Catalysis depends on D131, which acts as the Nucleophile. Positions 441–460 are disordered; the sequence is ENPPKRPHHRTAHGSWADSQ. Residues H448, D486, and E495 contribute to the active site. A CBM3 1 domain is found at 529–684; that stretch reads VPEDEIFVEA…GVLVFGREPG (156 aa). Residues 684–730 are disordered; sequence GSASKSTSKDNGLSKATPTVKTESQPTAKHTQNPASDFKTPANQNSV. Residues 686–729 are compositionally biased toward polar residues; the sequence is ASKSTSKDNGLSKATPTVKTESQPTAKHTQNPASDFKTPANQNS. In terms of domain architecture, CBM3 2 spans 736–887; the sequence is IKGEVVLQYA…SNKLVYGKEP (152 aa).

This sequence belongs to the glycosyl hydrolase 9 (cellulase E) family.

It carries out the reaction Endohydrolysis of (1-&gt;4)-beta-D-glucosidic linkages in cellulose, lichenin and cereal beta-D-glucans.. Its pathway is glycan metabolism; cellulose degradation. In terms of biological role, this enzyme catalyzes the endohydrolysis of 1,4-beta-glucosidic linkages in cellulose, lichenin and cereal beta-D-glucans. Principally active against barley beta-glucan. This Acetivibrio thermocellus (strain ATCC 27405 / DSM 1237 / JCM 9322 / NBRC 103400 / NCIMB 10682 / NRRL B-4536 / VPI 7372) (Clostridium thermocellum) protein is Endoglucanase 1 (celI).